The following is a 237-amino-acid chain: MPTEDAYPELQEEEIDVEAELEKLILEDREAEASTSSGEASAEASQDLSETLKQLQQELEITRQQLKEKEESYIRLYADFENYRRRTQREKEEFSQKERQKFVLEILPVVDSFERAQQQLKLETDREREVHNSYQSVYRLLVECLKKMGVSRMKSVGQPFDPNLHEAIARQPSSEYPEDVVAVEYQPGYKLGDLVIRHAMVAVSSGSPTSEPSPSDPATPKPEPESTPASPQNPQHS.

Disordered stretches follow at residues 27 to 51 (EDRE…LSET) and 202 to 237 (AVSS…PQHS). Low complexity-rich tracts occupy residues 33–45 (ASTS…AEAS) and 204–213 (SSGSPTSEPS). Over residues 227-237 (TPASPQNPQHS) the composition is skewed to polar residues.

It belongs to the GrpE family. Homodimer.

It is found in the cytoplasm. Participates actively in the response to hyperosmotic and heat shock by preventing the aggregation of stress-denatured proteins, in association with DnaK and GrpE. It is the nucleotide exchange factor for DnaK and may function as a thermosensor. Unfolded proteins bind initially to DnaJ; upon interaction with the DnaJ-bound protein, DnaK hydrolyzes its bound ATP, resulting in the formation of a stable complex. GrpE releases ADP from DnaK; ATP binding to DnaK triggers the release of the substrate protein, thus completing the reaction cycle. Several rounds of ATP-dependent interactions between DnaJ, DnaK and GrpE are required for fully efficient folding. In Synechococcus sp. (strain JA-3-3Ab) (Cyanobacteria bacterium Yellowstone A-Prime), this protein is Protein GrpE.